We begin with the raw amino-acid sequence, 181 residues long: MKSIAVTGYKNFELGIFKKDADEAVYIKETIKRHLLPLVEDGLEWVIISGQLGIELWAGDVVAELKADYPIKLAILEPFEKQSANWNEANQLWASEVLEKADYHAFITKRPYESPAQFAARDGFIIDNTDGALLVYDLEKEGSPKFFYDRATQAKEQSNYYIDCIDFYALQEVVEDMNQTF.

The protein belongs to the UPF0398 family.

The protein is UPF0398 protein lmo1889 of Listeria monocytogenes serovar 1/2a (strain ATCC BAA-679 / EGD-e).